The following is a 442-amino-acid chain: Ribosomal protein uS12 methylthiotransferase RimO (442 aa).

Positions 8-118 constitute an MTTase N-terminal domain; it reads PKVGFVSLGC…VLGHVHKYVE (111 aa). Cys-17, Cys-53, Cys-82, Cys-150, Cys-154, and Cys-157 together coordinate [4Fe-4S] cluster. The 238-residue stretch at 136–373 folds into the Radical SAM core domain; sequence LTPRHYAYLK…MELQQQVSIR (238 aa). The region spanning 376–442 is the TRAM domain; sequence ARKVGKEMLV…EYDLWASLID (67 aa).

The protein belongs to the methylthiotransferase family. RimO subfamily. [4Fe-4S] cluster serves as cofactor.

The protein resides in the cytoplasm. The catalysed reaction is L-aspartate(89)-[ribosomal protein uS12]-hydrogen + (sulfur carrier)-SH + AH2 + 2 S-adenosyl-L-methionine = 3-methylsulfanyl-L-aspartate(89)-[ribosomal protein uS12]-hydrogen + (sulfur carrier)-H + 5'-deoxyadenosine + L-methionine + A + S-adenosyl-L-homocysteine + 2 H(+). Its function is as follows. Catalyzes the methylthiolation of an aspartic acid residue of ribosomal protein uS12. The protein is Ribosomal protein uS12 methylthiotransferase RimO of Aeromonas hydrophila subsp. hydrophila (strain ATCC 7966 / DSM 30187 / BCRC 13018 / CCUG 14551 / JCM 1027 / KCTC 2358 / NCIMB 9240 / NCTC 8049).